A 290-amino-acid chain; its full sequence is Light-independent protochlorophyllide reductase iron-sulfur ATP-binding protein (290 aa).

Residues 10-15 (GIGKST) and K39 each bind ATP. S14 provides a ligand contact to Mg(2+). The [4Fe-4S] cluster site is built by C95 and C129. Residue 180–181 (NR) participates in ATP binding.

It belongs to the NifH/BchL/ChlL family. Homodimer. Protochlorophyllide reductase is composed of three subunits; ChlL, ChlN and ChlB. Requires [4Fe-4S] cluster as cofactor.

It is found in the plastid. It localises to the chloroplast. It catalyses the reaction chlorophyllide a + oxidized 2[4Fe-4S]-[ferredoxin] + 2 ADP + 2 phosphate = protochlorophyllide a + reduced 2[4Fe-4S]-[ferredoxin] + 2 ATP + 2 H2O. It participates in porphyrin-containing compound metabolism; chlorophyll biosynthesis (light-independent). Functionally, component of the dark-operative protochlorophyllide reductase (DPOR) that uses Mg-ATP and reduced ferredoxin to reduce ring D of protochlorophyllide (Pchlide) to form chlorophyllide a (Chlide). This reaction is light-independent. The L component serves as a unique electron donor to the NB-component of the complex, and binds Mg-ATP. The sequence is that of Light-independent protochlorophyllide reductase iron-sulfur ATP-binding protein from Anthoceros angustus (Hornwort).